Here is a 418-residue protein sequence, read N- to C-terminus: Arrestin domain-containing protein 4 (418 aa).

Short sequence motifs (PPxY motif) lie at residues 350-353 (PPNY) and 395-398 (PPLY).

Belongs to the arrestin family. In terms of assembly, interacts with ADRB2. Interacts (via PPxY motifs) with ITCH, NEDD4L and WWP2. Interacts with AVPR2. Identified in a complex containing at least ARRDC4, AVPR2 and HGS. Interacts with SLC11A2; controls the incorporation of SLC11A2 into extracellular vesicles through an ubiquitination-dependent mechanism. Interacts with TRIM65.

It is found in the early endosome. The protein resides in the cell membrane. The protein localises to the cytoplasmic vesicle. Its function is as follows. Functions as an adapter recruiting ubiquitin-protein ligases to their specific substrates. Plays a role in endocytosis of activated G protein-coupled receptors (GPCRs). Through an ubiquitination-dependent mechanism also plays a role in the incorporation of SLC11A2 into extracellular vesicles. May play a role in glucose uptake. Participates in innate immune response by promoting IFIH1/MDA5 activation through interaction with TRIM65. The protein is Arrestin domain-containing protein 4 (ARRDC4) of Homo sapiens (Human).